The sequence spans 90 residues: Probable Fe(2+)-trafficking protein (90 aa).

It belongs to the Fe(2+)-trafficking protein family.

Functionally, could be a mediator in iron transactions between iron acquisition and iron-requiring processes, such as synthesis and/or repair of Fe-S clusters in biosynthetic enzymes. The protein is Probable Fe(2+)-trafficking protein of Haemophilus influenzae (strain 86-028NP).